A 392-amino-acid chain; its full sequence is 23S rRNA (uracil(747)-C(5))-methyltransferase RlmC (392 aa).

Residues Cys4, Cys12, Cys15, and Cys93 each contribute to the [4Fe-4S] cluster site. Positions 218, 247, 275, and 321 each coordinate S-adenosyl-L-methionine. Cys348 acts as the Nucleophile in catalysis.

Belongs to the class I-like SAM-binding methyltransferase superfamily. RNA M5U methyltransferase family. RlmC subfamily.

It carries out the reaction uridine(747) in 23S rRNA + S-adenosyl-L-methionine = 5-methyluridine(747) in 23S rRNA + S-adenosyl-L-homocysteine + H(+). Its function is as follows. Catalyzes the formation of 5-methyl-uridine at position 747 (m5U747) in 23S rRNA. This Haemophilus influenzae (strain ATCC 51907 / DSM 11121 / KW20 / Rd) protein is 23S rRNA (uracil(747)-C(5))-methyltransferase RlmC.